Consider the following 389-residue polypeptide: Tryptophan 2,3-dioxygenase (389 aa).

Residues Phe-60–His-64 and Arg-131 each bind substrate. His-316 lines the heme pocket. Residue Thr-331 coordinates substrate.

Belongs to the tryptophan 2,3-dioxygenase family. In terms of assembly, homotetramer. Dimer of dimers. Heme is required as a cofactor.

The catalysed reaction is L-tryptophan + O2 = N-formyl-L-kynurenine. Its pathway is amino-acid degradation; L-tryptophan degradation via kynurenine pathway; L-kynurenine from L-tryptophan: step 1/2. It participates in pigment biosynthesis; ommochrome biosynthesis. Functionally, heme-dependent dioxygenase that catalyzes the oxidative cleavage of the L-tryptophan (L-Trp) pyrrole ring and converts L-tryptophan to N-formyl-L-kynurenine. Catalyzes the oxidative cleavage of the indole moiety. The sequence is that of Tryptophan 2,3-dioxygenase from Mayetiola destructor (Hessian fly).